The chain runs to 341 residues: Adhesion protein Bd37 (341 aa).

Residues 1-21 form the signal peptide; it reads MKTSKILNTAAICLLAMGFNG. N-linked (GlcNAc...) asparagine glycans are attached at residues N23 and N30. C26 and C307 are disulfide-bonded. Residues 36-75 are disordered; sequence AAANPVVSTPGNDAQQAGTQQGGANSKSVPEQQPQQAAGE. Positions 49–59 are enriched in low complexity; that stretch reads AQQAGTQQGGA. Positions 60–75 are enriched in polar residues; the sequence is NSKSVPEQQPQQAAGE. S311 is lipidated: GPI-anchor amidated serine. A propeptide spans 312 to 341 (removed in mature form); that stretch reads GQGSSPKKPSFAAVPSSLSAIVFGIIVSMF.

Post-translationally, the signal sequence is cleaved. In terms of processing, glycosylated. Palmitoylated. Post-translationally, not myristoylated.

The protein localises to the cell membrane. Its subcellular location is the secreted. It localises to the vesicle. In terms of biological role, binds to host erythrocytes. The protein is Adhesion protein Bd37 of Babesia divergens.